Reading from the N-terminus, the 236-residue chain is Ribonuclease 3 (236 aa).

An RNase III domain is found at 8–130 (FRRLSQALDY…TFAAVSFDAD (123 aa)). A Mg(2+)-binding site is contributed by E43. D47 is an active-site residue. Residues D116 and E119 each coordinate Mg(2+). The active site involves E119. In terms of domain architecture, DRBM spans 157 to 227 (DAKTRLQEAL…AEAALTLLEQ (71 aa)).

Belongs to the ribonuclease III family. Homodimer. The cofactor is Mg(2+).

It localises to the cytoplasm. The enzyme catalyses Endonucleolytic cleavage to 5'-phosphomonoester.. Functionally, digests double-stranded RNA. Involved in the processing of primary rRNA transcript to yield the immediate precursors to the large and small rRNAs (23S and 16S). Processes some mRNAs, and tRNAs when they are encoded in the rRNA operon. Processes pre-crRNA and tracrRNA of type II CRISPR loci if present in the organism. This is Ribonuclease 3 from Chromobacterium violaceum (strain ATCC 12472 / DSM 30191 / JCM 1249 / CCUG 213 / NBRC 12614 / NCIMB 9131 / NCTC 9757 / MK).